Reading from the N-terminus, the 712-residue chain is Polyribonucleotide nucleotidyltransferase (712 aa).

Positions 487 and 493 each coordinate Mg(2+). The region spanning 554 to 613 (PRIEVMNIPVDKIREVIGSGGKVIREIVEKTGAKINIEDDGTVKIASSSGKEIEAARKWI) is the KH domain. The S1 motif domain occupies 623–691 (GQIYEGTVVK…ERGKVRLSMK (69 aa)).

Belongs to the polyribonucleotide nucleotidyltransferase family. Mg(2+) is required as a cofactor.

It is found in the cytoplasm. The enzyme catalyses RNA(n+1) + phosphate = RNA(n) + a ribonucleoside 5'-diphosphate. Its function is as follows. Involved in mRNA degradation. Catalyzes the phosphorolysis of single-stranded polyribonucleotides processively in the 3'- to 5'-direction. The protein is Polyribonucleotide nucleotidyltransferase of Rhizobium etli (strain CIAT 652).